The following is a 347-amino-acid chain: Lipopolysaccharide core heptosyltransferase OpsX (347 aa).

It belongs to the glycosyltransferase 9 family.

Its pathway is bacterial outer membrane biogenesis; LPS core biosynthesis. Functionally, catalyzes heptose transfer to the lipopolysaccharide core. It transfers the first L-glycero-D-manno-heptose to the phosphorylated 3-deoxy-alpha-D-manno-octulosonic acid (Kdo-P) of the inner core. The chain is Lipopolysaccharide core heptosyltransferase OpsX from Haemophilus influenzae (strain ATCC 51907 / DSM 11121 / KW20 / Rd).